We begin with the raw amino-acid sequence, 434 residues long: Glutamyl-tRNA reductase (434 aa).

Residues 49–52 (TCNR), serine 109, 114–116 (EPQ), and glutamine 120 contribute to the substrate site. Catalysis depends on cysteine 50, which acts as the Nucleophile. 189 to 194 (GAGEMC) contacts NADP(+).

Belongs to the glutamyl-tRNA reductase family. Homodimer.

The catalysed reaction is (S)-4-amino-5-oxopentanoate + tRNA(Glu) + NADP(+) = L-glutamyl-tRNA(Glu) + NADPH + H(+). It functions in the pathway porphyrin-containing compound metabolism; protoporphyrin-IX biosynthesis; 5-aminolevulinate from L-glutamyl-tRNA(Glu): step 1/2. Catalyzes the NADPH-dependent reduction of glutamyl-tRNA(Glu) to glutamate 1-semialdehyde (GSA). In Geobacter sulfurreducens (strain ATCC 51573 / DSM 12127 / PCA), this protein is Glutamyl-tRNA reductase.